Reading from the N-terminus, the 379-residue chain is Succinyl-diaminopimelate desuccinylase (379 aa).

Residue His-70 coordinates Zn(2+). Asp-72 is a catalytic residue. Residue Asp-103 coordinates Zn(2+). The Proton acceptor role is filled by Glu-137. Residues Glu-138, Glu-166, and His-352 each coordinate Zn(2+).

The protein belongs to the peptidase M20A family. DapE subfamily. In terms of assembly, homodimer. Requires Zn(2+) as cofactor. The cofactor is Co(2+).

The enzyme catalyses N-succinyl-(2S,6S)-2,6-diaminopimelate + H2O = (2S,6S)-2,6-diaminopimelate + succinate. Its pathway is amino-acid biosynthesis; L-lysine biosynthesis via DAP pathway; LL-2,6-diaminopimelate from (S)-tetrahydrodipicolinate (succinylase route): step 3/3. Its function is as follows. Catalyzes the hydrolysis of N-succinyl-L,L-diaminopimelic acid (SDAP), forming succinate and LL-2,6-diaminopimelate (DAP), an intermediate involved in the bacterial biosynthesis of lysine and meso-diaminopimelic acid, an essential component of bacterial cell walls. This chain is Succinyl-diaminopimelate desuccinylase, found in Burkholderia vietnamiensis (strain G4 / LMG 22486) (Burkholderia cepacia (strain R1808)).